We begin with the raw amino-acid sequence, 875 residues long: Alanine--tRNA ligase (875 aa).

4 residues coordinate Zn(2+): His-564, His-568, Cys-666, and His-670.

This sequence belongs to the class-II aminoacyl-tRNA synthetase family. In terms of assembly, homotetramer. Zn(2+) serves as cofactor.

It localises to the cytoplasm. It carries out the reaction tRNA(Ala) + L-alanine + ATP = L-alanyl-tRNA(Ala) + AMP + diphosphate. Functionally, catalyzes the attachment of alanine to tRNA(Ala) in a two-step reaction: alanine is first activated by ATP to form Ala-AMP and then transferred to the acceptor end of tRNA(Ala). Also edits incorrectly charged Ser-tRNA(Ala) and Gly-tRNA(Ala) via its editing domain. The sequence is that of Alanine--tRNA ligase from Klebsiella pneumoniae subsp. pneumoniae (strain ATCC 700721 / MGH 78578).